Here is a 445-residue protein sequence, read N- to C-terminus: UPF0210 protein llmg_1581 (445 aa).

Belongs to the UPF0210 family. Homodimer.

The sequence is that of UPF0210 protein llmg_1581 from Lactococcus lactis subsp. cremoris (strain MG1363).